We begin with the raw amino-acid sequence, 613 residues long: TANK-binding kinase 1-binding protein 1 (613 aa).

The segment at M1 to C280 is homodimerization. Positions Y48–I162 form a coiled coil. At S184 the chain carries Phosphoserine. Residues T218–Q277 adopt a coiled-coil conformation. An interaction with TBK1 and IKBKE region spans residues G281–N330. A disordered region spans residues A328–R457. Residues P346–A361 are compositionally biased toward pro residues. The segment covering P362 to S372 has biased composition (low complexity). S365, S372, S379, S385, S400, and S415 each carry phosphoserine. Positions P389 to C406 are enriched in pro residues. A compositionally biased stretch (pro residues) spans P416–G433. A phosphoserine mark is found at S502 and S532. The segment at I581–H607 adopts a UBZ1-type zinc-finger fold. Zn(2+) is bound by residues C584, C587, H603, and H607.

Homodimer. May form a heterodimer with NAP1. Interacts with TKB1 and IKBKE. Weakly interacts with DDX3X.

In terms of biological role, adapter protein which constitutively binds TBK1 and IKBKE playing a role in antiviral innate immunity. Essential for the efficient induction of IRF-dependent transcription following infection with Sendai virus. The polypeptide is TANK-binding kinase 1-binding protein 1 (Rattus norvegicus (Rat)).